Here is a 396-residue protein sequence, read N- to C-terminus: MAKAKFERLKPHVNVGTIGHVDHGKTTLTAAIATVAAITSGGEAKDYASIDSAPEEKARGITINTSHVEYDTPSRHYAHVDCPGHADYVKNMITGAAQMDGAILVVSATDGPMPQTREHILLSRQVGVPYIVVFMNKCDVVDDEELLELVEMEVRELLSDYDFPGDDTPIIHGSATEALKGSQEKYGQPAVVELLNVLDTYIPEPERDIDKAFLMPIEDVFSISGRGTVVTGRVESGIVRVGEEIEIVGIRDTQKTTCTGVEMFRKLLDEGRAGENCGVLLRGTKREDVQRGQVLAKPGSITPHTKFDAEVYVLSKEEGGRHTPFLNGYRPQFYFRTTDVTGAIQLQDGTEMVMPGDNVEMGVELIHPIAMDKGLRFAIREGGRTVGAGVVANVHV.

Residues 10-206 (KPHVNVGTIG…VLDTYIPEPE (197 aa)) form the tr-type G domain. The interval 19–26 (GHVDHGKT) is G1. 19 to 26 (GHVDHGKT) lines the GTP pocket. Thr-26 serves as a coordination point for Mg(2+). A G2 region spans residues 60–64 (GITIN). Residues 81-84 (DCPG) form a G3 region. GTP is bound by residues 81 to 85 (DCPGH) and 136 to 139 (NKCD). The tract at residues 136–139 (NKCD) is G4. The G5 stretch occupies residues 174–176 (SAT).

This sequence belongs to the TRAFAC class translation factor GTPase superfamily. Classic translation factor GTPase family. EF-Tu/EF-1A subfamily. In terms of assembly, monomer.

The protein resides in the cytoplasm. It catalyses the reaction GTP + H2O = GDP + phosphate + H(+). Its function is as follows. GTP hydrolase that promotes the GTP-dependent binding of aminoacyl-tRNA to the A-site of ribosomes during protein biosynthesis. The sequence is that of Elongation factor Tu from Psychrobacter arcticus (strain DSM 17307 / VKM B-2377 / 273-4).